The following is a 370-amino-acid chain: NSFL1 cofactor p47 (370 aa).

Positions 54–73 are disordered; it reads SQATPSSVSRGTAPSDNRVT. Residues Ser74, Ser102, and Ser114 each carry the phosphoserine modification. 2 disordered regions span residues 80-116 and 137-157; these read HDQD…RSPN and VTKS…GYRL. The Nuclear localization signal signature appears at 109–115; sequence PPRKRSP. Ser140 is modified (phosphoserine; by CDK1). Tyr167 is modified (phosphotyrosine). The Nuclear localization signal motif lies at 172–175; sequence RRRH. Phosphoserine is present on residues Ser176, Ser192, and Ser272. Positions 179 to 244 constitute an SEP domain; sequence DVHVVLKLWK…MEDHRDEDFV (66 aa). Positions 272 to 292 are disordered; sequence SPAQQAENEAKASSSISIDES. Residues 291-368 form the UBX domain; sequence ESQPTTNIQI…NLLNAVIVQR (78 aa).

In terms of assembly, part of a ternary complex containing STX5A, NSFL1C and VCP. NSFL1C forms a homotrimer that binds to one end of a VCP homohexamer. The complex binds to membranes enriched in phosphatidylethanolamine-containing lipids and promotes Golgi membrane fusion. Interaction with VCIP135 leads to dissociation of the complex via ATP hydrolysis by VCP. Binds ubiquitin and mono-ubiquitinated proteins via its N-terminal UBA-like domain when bound to VCP. Phosphorylated during mitosis. Phosphorylation inhibits interaction with Golgi membranes and is required for the fragmentation of the Golgi stacks during mitosis.

It localises to the nucleus. Its subcellular location is the golgi apparatus. The protein localises to the golgi stack. The protein resides in the chromosome. It is found in the cytoplasm. It localises to the cytoskeleton. Its subcellular location is the microtubule organizing center. The protein localises to the centrosome. Functionally, reduces the ATPase activity of VCP. Necessary for the fragmentation of Golgi stacks during mitosis and for VCP-mediated reassembly of Golgi stacks after mitosis. May play a role in VCP-mediated formation of transitional endoplasmic reticulum (tER). Inhibits the activity of CTSL (in vitro). Together with UBXN2B/p37, regulates the centrosomal levels of kinase AURKA/Aurora A during mitotic progression by promoting AURKA removal from centrosomes in prophase. Also, regulates spindle orientation during mitosis. The chain is NSFL1 cofactor p47 (NSFL1C) from Bos taurus (Bovine).